A 170-amino-acid polypeptide reads, in one-letter code: UPF0260 protein Rpal_2074 (170 aa).

The protein belongs to the UPF0260 family.

In Rhodopseudomonas palustris (strain TIE-1), this protein is UPF0260 protein Rpal_2074.